The chain runs to 530 residues: Glucose-6-phosphate isomerase (530 aa).

Glu-356 (proton donor) is an active-site residue. Active-site residues include His-387 and Lys-502.

It belongs to the GPI family.

The protein localises to the cytoplasm. It carries out the reaction alpha-D-glucose 6-phosphate = beta-D-fructose 6-phosphate. The protein operates within carbohydrate biosynthesis; gluconeogenesis. Its pathway is carbohydrate degradation; glycolysis; D-glyceraldehyde 3-phosphate and glycerone phosphate from D-glucose: step 2/4. Catalyzes the reversible isomerization of glucose-6-phosphate to fructose-6-phosphate. This Borreliella afzelii (strain PKo) (Borrelia afzelii) protein is Glucose-6-phosphate isomerase.